The primary structure comprises 1254 residues: Ubiquitin carboxyl-terminal hydrolase 12 (1254 aa).

The residue at position 84 (Ser-84) is a Phosphoserine. The region spanning 97-199 is the DUSP domain; it reads NVLEQQRDVV…GSYPVVTNLV (103 aa). The USP domain occupies 364-1110; sequence TGLVNLGNTC…SAYLLFYIRR (747 aa). Cys-373 (nucleophile) is an active-site residue. The tract at residues 827–893 is disordered; it reads DEGDTEGSEA…EPELTDKPEA (67 aa). Residues 854 to 864 are compositionally biased toward low complexity; sequence TVTNNENVNNT. Acidic residues predominate over residues 867-883; the sequence is RDEDMELTDDVEEDAST. The active-site Proton acceptor is His-1068. Residue Ser-1160 is modified to Phosphoserine. The segment at 1188 to 1207 is disordered; the sequence is QDCNDEDDNDDGERTNSGRR. Residues 1189-1198 show a composition bias toward acidic residues; that stretch reads DCNDEDDNDD.

This sequence belongs to the peptidase C19 family. As to quaternary structure, interacts with FZO1.

The catalysed reaction is Thiol-dependent hydrolysis of ester, thioester, amide, peptide and isopeptide bonds formed by the C-terminal Gly of ubiquitin (a 76-residue protein attached to proteins as an intracellular targeting signal).. Ubiquitin carboxyl-terminal hydrolase that recognizes ubiquitin chains that stabilize FZO1 and promote mitochondrial fusion. UBP12 deubiquitylates FZO1 only after oligomerization. The polypeptide is Ubiquitin carboxyl-terminal hydrolase 12 (UBP12) (Saccharomyces cerevisiae (strain ATCC 204508 / S288c) (Baker's yeast)).